The following is a 148-amino-acid chain: Probable glucosamine 6-phosphate N-acetyltransferase (148 aa).

In terms of domain architecture, N-acetyltransferase spans 3-148 (ISINELNFDD…KQMALYLNGK (146 aa)). Residues T25, 72–75 (KFIH), and 84–86 (EDV) each bind substrate. Acetyl-CoA-binding positions include 86 to 88 (VVV) and 94 to 99 (LHGIGK). Substrate-binding positions include 115–116 (YK) and D120. 129–131 (YCK) lines the acetyl-CoA pocket. Residue E138 coordinates substrate.

The protein belongs to the acetyltransferase family. GNA1 subfamily.

It carries out the reaction D-glucosamine 6-phosphate + acetyl-CoA = N-acetyl-D-glucosamine 6-phosphate + CoA + H(+). The protein operates within nucleotide-sugar biosynthesis; UDP-N-acetyl-alpha-D-glucosamine biosynthesis; N-acetyl-alpha-D-glucosamine 1-phosphate from alpha-D-glucosamine 6-phosphate (route I): step 1/2. The sequence is that of Probable glucosamine 6-phosphate N-acetyltransferase from Acanthamoeba polyphaga (Amoeba).